The chain runs to 330 residues: MPVNLKGRSFLTLKDFTSQEIQHLLDLSRDLKAKKRMGVKGESLLGKNIVLLFEKASTRTRCAFEVAALDEGAHVTFLGSNDSQIGKKESIEDTAKVLGRFYDGMEFRGFKQETVETLAAHAGIPVWNGLTDLYHPTQILADFLTIMEHIDKPLNKVKFAYVGDARNNMGNSLMIGAAKMGMDFRAVAPKELLPKGELVEEMRAVAAETGGEITLTDDVAEGVKDADVIYTDVWVSMGEEDQFEVRIKQLLPYQVNMDMIKATGNPDMIFMHCLPAFHDLETTVGKEIHEKFGLKSMEVTDEVFRSRHSVVFDEAENRLHTIKAIMVATL.

Carbamoyl phosphate contacts are provided by residues 57 to 60 (STRT), Gln84, Arg108, and 135 to 138 (HPTQ). Residues Asn168, Asp232, and 236-237 (SM) contribute to the L-ornithine site. Carbamoyl phosphate contacts are provided by residues 273-274 (CL) and Arg318.

Belongs to the aspartate/ornithine carbamoyltransferase superfamily. OTCase family.

It is found in the cytoplasm. It carries out the reaction carbamoyl phosphate + L-ornithine = L-citrulline + phosphate + H(+). The protein operates within amino-acid biosynthesis; L-arginine biosynthesis; L-arginine from L-ornithine and carbamoyl phosphate: step 1/3. Its function is as follows. Reversibly catalyzes the transfer of the carbamoyl group from carbamoyl phosphate (CP) to the N(epsilon) atom of ornithine (ORN) to produce L-citrulline. This is Ornithine carbamoyltransferase from Alkaliphilus metalliredigens (strain QYMF).